A 236-amino-acid chain; its full sequence is Transmembrane protein 70 homolog, mitochondrial (236 aa).

A mitochondrion-targeting transit peptide spans 1–64 (MLGLRAMLPK…WLSVKSTKTE (64 aa)). Helical transmembrane passes span 83-103 (MVKF…PILL) and 116-136 (VFLC…LHFI).

Belongs to the TMEM70 family. As to quaternary structure, associates with mitochondrial complex I assembly intermediates during its biogenesis.

The protein localises to the mitochondrion membrane. In terms of biological role, scaffold protein that participates in the c-ring assembly of mitochondrial ATP synthase (F(1)F(0) ATP synthase or complex V). Also binds the mitochondrial proton-transporting ATP synthase complex I and may play a role in the stability of its membrane-bound subassemblies. The protein is Transmembrane protein 70 homolog, mitochondrial of Drosophila melanogaster (Fruit fly).